The sequence spans 696 residues: Tensin-4 (696 aa).

An N-terminal signal peptide occupies residues Met1 to Leu14. 3 disordered regions span residues Leu157–Gln246, Ser271–Ser344, and Leu356–Gln416. A compositionally biased stretch (polar residues) spans Ser192–Asn203. Position 230 is a phosphoserine (Ser230). Positions Ser271 to Ser304 are enriched in low complexity. 2 stretches are compositionally biased toward polar residues: residues Gln326–Ser344 and Pro372–Lys397. Positions Trp429–Gln536 constitute an SH2 domain. Residues Cys563–Leu690 enclose the PTB domain.

Belongs to the PTEN phosphatase protein family. Interacts (via SH2 domain) with Rho GTPase-activating protein DLC1 (via C-terminus); the interaction is independent of DLC1 tyrosine phosphorylation. Interacts with integrin ITGB1; the interaction displaces tensin TNS3 from the ITGB1 cytoplasmic tail and promotes ITGB1 stability. Interacts (via SH2 domain) with E3 ubiquitin-protein ligase CBL (phosphorylated on 'Tyr-780'); the interaction is enhanced in the presence of EGF and reduces interaction of CBL with EGFR. Interacts (via SH2 domain) with receptor tyrosine kinase MET (when phosphorylated); the interaction increases MET protein stability.

Its subcellular location is the cell junction. The protein localises to the focal adhesion. It is found in the cytoplasm. The protein resides in the cytoskeleton. Functionally, promotes EGF-induced cell migration by displacing tensin TNS3 from the cytoplasmic tail of integrin ITGB1 which results in dissociation of TNS3 from focal adhesions, disassembly of actin stress fibers and initiation of cell migration. Suppresses ligand-induced degradation of EGFR by reducing EGFR ubiquitination in the presence of EGF. Increases MET protein stability by inhibiting MET endocytosis and subsequent lysosomal degradation which leads to increased cell survival, proliferation and migration. The protein is Tensin-4 (Tns4) of Mus musculus (Mouse).